The sequence spans 372 residues: MKVLVTGANGFVGRNLCAHLAERGGIEVVPFTRESSVGNLPELIRSVDFIFHLAGVNRPEKPEEFKIGNSELTYALCEAVRSNGRAIPLLYTSSIQAEVDNEYGLSKRAAEEHLQVLGEDIGCPVYIFRLPNVFGKWSRPNYNSAVATFCHNIIRDIPIQINNSSAEITLVYIDDVVRTFMKVMDGKLSNAVSLQVEPQYQISVGELAEQLYEFRNSRKSLTTARVGSGLTRALYSTYLSFLPEDSFSYDVPMHSDPRGTFVEMLKTADSGQFSFFTAHPGVTRGGHYHHSKTEKFLVIKGMARFKFRNILTGAFYEICTNGEKAEIVETVPGWTHDITNVGTDDMVVMLWANEVFDRENPDTYACSVGEGA.

NAD(+) contacts are provided by residues 7–30 (GANG…EVVP), leucine 53, tyrosine 103, and lysine 107. The active-site Proton acceptor is the tyrosine 103. Residues asparagine 132 and 279–282 (HPGV) contribute to the substrate site.

This sequence belongs to the NAD(P)-dependent epimerase/dehydratase family. In terms of assembly, homodimer.

It catalyses the reaction UDP-2-acetamido-2,6-dideoxy-beta-L-arabino-hex-4-ulose + NADH + H(+) = UDP-2-acetamido-2,6-dideoxy-beta-L-talose + NAD(+). The enzyme catalyses UDP-2-acetamido-2,6-dideoxy-beta-L-arabino-hex-4-ulose + NADPH + H(+) = UDP-2-acetamido-2,6-dideoxy-beta-L-talose + NADP(+). The protein operates within bacterial outer membrane biogenesis; LPS O-antigen biosynthesis. Bifunctional enzyme that mediates C-3 epimerization of the second intermediate followed by reduction at C-4 during serogroup O11 O-antigen biosynthesis, thus catalyzing the conversion of UDP-N-acetyl-D-glucosamine to precursors for the biosynthesis of O antigen. This Pseudomonas aeruginosa (strain ATCC 29260 / BCRC 12902 / CIP 102967 / NCIMB 11965 / PA103) protein is UDP-2-acetamido-2,6-beta-L-arabino-hexul-4-ose reductase.